We begin with the raw amino-acid sequence, 516 residues long: Glucose-1-phosphate adenylyltransferase large subunit 1, chloroplastic/amyloplastic (516 aa).

The transit peptide at 1–45 (MQFALALDTNSGPHQIRSCEGDGIDRLEKLSIGGRKQEKALRNRC) directs the protein to the chloroplast.

It belongs to the bacterial/plant glucose-1-phosphate adenylyltransferase family. As to quaternary structure, heterotetramer. In terms of tissue distribution, endosperm.

The protein localises to the plastid. Its subcellular location is the chloroplast. It is found in the amyloplast. It catalyses the reaction alpha-D-glucose 1-phosphate + ATP + H(+) = ADP-alpha-D-glucose + diphosphate. It participates in glycan biosynthesis; starch biosynthesis. Its activity is regulated as follows. Activated by 3'phosphoglycerate, inhibited by orthophosphate. Allosteric regulation. This protein plays a role in synthesis of starch. It catalyzes the synthesis of the activated glycosyl donor, ADP-glucose from Glc-1-P and ATP. The protein is Glucose-1-phosphate adenylyltransferase large subunit 1, chloroplastic/amyloplastic (SH2) of Zea mays (Maize).